The chain runs to 237 residues: Ribonuclease PH (237 aa).

Phosphate contacts are provided by residues R86 and 124 to 126 (GTR).

Belongs to the RNase PH family. In terms of assembly, homohexameric ring arranged as a trimer of dimers.

It carries out the reaction tRNA(n+1) + phosphate = tRNA(n) + a ribonucleoside 5'-diphosphate. Phosphorolytic 3'-5' exoribonuclease that plays an important role in tRNA 3'-end maturation. Removes nucleotide residues following the 3'-CCA terminus of tRNAs; can also add nucleotides to the ends of RNA molecules by using nucleoside diphosphates as substrates, but this may not be physiologically important. Probably plays a role in initiation of 16S rRNA degradation (leading to ribosome degradation) during starvation. In Nitrobacter hamburgensis (strain DSM 10229 / NCIMB 13809 / X14), this protein is Ribonuclease PH.